Consider the following 318-residue polypeptide: tRNA dimethylallyltransferase (318 aa).

Glycine 28–serine 35 contributes to the ATP binding site. Threonine 30–serine 35 is a substrate binding site. Positions aspartate 53–glutamine 56 are interaction with substrate tRNA.

It belongs to the IPP transferase family. In terms of assembly, monomer. Mg(2+) serves as cofactor.

It catalyses the reaction adenosine(37) in tRNA + dimethylallyl diphosphate = N(6)-dimethylallyladenosine(37) in tRNA + diphosphate. Catalyzes the transfer of a dimethylallyl group onto the adenine at position 37 in tRNAs that read codons beginning with uridine, leading to the formation of N6-(dimethylallyl)adenosine (i(6)A). This is tRNA dimethylallyltransferase from Parafrankia sp. (strain EAN1pec).